Consider the following 67-residue polypeptide: Large ribosomal subunit protein uL29 (67 aa).

This sequence belongs to the universal ribosomal protein uL29 family.

The protein is Large ribosomal subunit protein uL29 of Desulfitobacterium hafniense (strain Y51).